Consider the following 665-residue polypeptide: Intraflagellar transport protein 70B (665 aa).

7 TPR repeats span residues 11-44 (DGEF…SPRS), 45-78 (RAGL…HPEL), 154-187 (TDGQ…SGYQ), 189-221 (DLSY…GIRQ), 393-424 (LTIQ…EKYI), 425-457 (PVLM…CNDH), and 459-492 (VWKL…HYDN). The tract at residues 130–154 (PGSRSLVEQLPSREGGEESGGENET) is disordered. A coiled-coil region spans residues 508–535 (YIMTSQNEEAEELMRKIEKEEEQLSYDD). The TPR 8 repeat unit spans residues 544–577 (CIVNLVIGTLYCAKGNYDFGISRVIKSLEPYNKK).

The protein belongs to the TTC30/dfy-1/fleer family. Interacts with the IFT B complex components IFT27, IFT46, IFT74, IFT52, IFT57, IFT80, IFT81 and IFT88. Interacts with KIF17.

It localises to the cell projection. It is found in the cilium. In terms of biological role, required for polyglutamylation of axonemal tubulin. Plays a role in anterograde intraflagellar transport (IFT), the process by which cilia precursors are transported from the base of the cilium to the site of their incorporation at the tip. The protein is Intraflagellar transport protein 70B of Homo sapiens (Human).